A 908-amino-acid polypeptide reads, in one-letter code: Protein translocase subunit SecA (908 aa).

ATP is bound by residues Gln-90, Gly-108–Thr-112, and Asp-503. Residues Ala-846 to Pro-864 are compositionally biased toward low complexity. The interval Ala-846–Gly-884 is disordered. Positions 892, 894, 903, and 904 each coordinate Zn(2+).

Belongs to the SecA family. Monomer and homodimer. Part of the essential Sec protein translocation apparatus which comprises SecA, SecYEG and auxiliary proteins SecDF-YajC and YidC. Zn(2+) is required as a cofactor.

The protein resides in the cell inner membrane. Its subcellular location is the cytoplasm. It carries out the reaction ATP + H2O + cellular proteinSide 1 = ADP + phosphate + cellular proteinSide 2.. In terms of biological role, part of the Sec protein translocase complex. Interacts with the SecYEG preprotein conducting channel. Has a central role in coupling the hydrolysis of ATP to the transfer of proteins into and across the cell membrane, serving both as a receptor for the preprotein-SecB complex and as an ATP-driven molecular motor driving the stepwise translocation of polypeptide chains across the membrane. The chain is Protein translocase subunit SecA from Cereibacter sphaeroides (strain KD131 / KCTC 12085) (Rhodobacter sphaeroides).